We begin with the raw amino-acid sequence, 439 residues long: Ribosomal protein uS12 methylthiotransferase RimO (439 aa).

One can recognise an MTTase N-terminal domain in the interval 7–119 (KQLCLISLGC…IDIMIAKKQN (113 aa)). [4Fe-4S] cluster is bound by residues cysteine 16, cysteine 50, cysteine 82, cysteine 151, cysteine 155, and cysteine 158. The 232-residue stretch at 137–368 (TGSSVHAYVK…ALKHQNHSFK (232 aa)) folds into the Radical SAM core domain.

This sequence belongs to the methylthiotransferase family. RimO subfamily. Requires [4Fe-4S] cluster as cofactor.

The protein resides in the cytoplasm. The enzyme catalyses L-aspartate(89)-[ribosomal protein uS12]-hydrogen + (sulfur carrier)-SH + AH2 + 2 S-adenosyl-L-methionine = 3-methylsulfanyl-L-aspartate(89)-[ribosomal protein uS12]-hydrogen + (sulfur carrier)-H + 5'-deoxyadenosine + L-methionine + A + S-adenosyl-L-homocysteine + 2 H(+). Its function is as follows. Catalyzes the methylthiolation of an aspartic acid residue of ribosomal protein uS12. The protein is Ribosomal protein uS12 methylthiotransferase RimO of Helicobacter pylori (strain ATCC 700392 / 26695) (Campylobacter pylori).